We begin with the raw amino-acid sequence, 348 residues long: tRNA N6-adenosine threonylcarbamoyltransferase (348 aa).

Positions 119 and 123 each coordinate Fe cation. Residues 141–145, Asp174, Gly187, Asp191, and Asn280 contribute to the substrate site; that span reads LVSGG. Fe cation is bound at residue Asp310.

This sequence belongs to the KAE1 / TsaD family. Requires Fe(2+) as cofactor.

It localises to the cytoplasm. The enzyme catalyses L-threonylcarbamoyladenylate + adenosine(37) in tRNA = N(6)-L-threonylcarbamoyladenosine(37) in tRNA + AMP + H(+). Functionally, required for the formation of a threonylcarbamoyl group on adenosine at position 37 (t(6)A37) in tRNAs that read codons beginning with adenine. Is involved in the transfer of the threonylcarbamoyl moiety of threonylcarbamoyl-AMP (TC-AMP) to the N6 group of A37, together with TsaE and TsaB. TsaD likely plays a direct catalytic role in this reaction. The polypeptide is tRNA N6-adenosine threonylcarbamoyltransferase (Enterococcus faecalis (strain ATCC 700802 / V583)).